A 91-amino-acid chain; its full sequence is Class I hydrophobin 3 (91 aa).

A signal peptide spans 1–17 (MLFRLFTIPSIALGVLG). Intrachain disulfides connect Cys-31-Cys-70, Cys-35-Cys-61, Cys-36-Cys-53, and Cys-71-Cys-87.

This sequence belongs to the fungal hydrophobin family. Self-assembles to form functional amyloid fibrils called rodlets. Self-assembly into fibrillar rodlets occurs spontaneously at hydrophobic:hydrophilic interfaces and the rodlets further associate laterally to form amphipathic monolayers. Expressed in conidia.

It localises to the secreted. Its subcellular location is the cell wall. Aerial growth, conidiation, and dispersal of filamentous fungi in the environment rely upon a capability of their secreting small amphipathic proteins called hydrophobins (HPBs) with low sequence identity. Class I can self-assemble into an outermost layer of rodlet bundles on aerial cell surfaces, conferring cellular hydrophobicity that supports fungal growth, development and dispersal; whereas Class II form highly ordered films at water-air interfaces through intermolecular interactions but contribute nothing to the rodlet structure. HYD3 is a class I hydrophobin located on the conidial surface that activates specifically the humoral and cellular immunity of Metarhizium acridum's own host insect, Locusta migratoria manilensis (Meyen) but not that of other non-host insects. Improves the resistance of locusts to both specialist and generalist fungal pathogens (wide host range) when topically applied to the cuticle, but has no effect on the fungal resistance of other insects, including Spodoptera frugiperda and Galleria mellonella. The polypeptide is Class I hydrophobin 3 (Metarhizium acridum (strain CQMa 102)).